A 213-amino-acid chain; its full sequence is Octanoyltransferase (213 aa).

The 176-residue stretch at Asp32–Pro207 folds into the BPL/LPL catalytic domain. Substrate is bound by residues Arg71 to His78, Ser138 to Gly140, and Gly151 to Ala153. Cys169 acts as the Acyl-thioester intermediate in catalysis.

It belongs to the LipB family.

The protein localises to the cytoplasm. The catalysed reaction is octanoyl-[ACP] + L-lysyl-[protein] = N(6)-octanoyl-L-lysyl-[protein] + holo-[ACP] + H(+). The protein operates within protein modification; protein lipoylation via endogenous pathway; protein N(6)-(lipoyl)lysine from octanoyl-[acyl-carrier-protein]: step 1/2. Catalyzes the transfer of endogenously produced octanoic acid from octanoyl-acyl-carrier-protein onto the lipoyl domains of lipoate-dependent enzymes. Lipoyl-ACP can also act as a substrate although octanoyl-ACP is likely to be the physiological substrate. In Enterobacter sp. (strain 638), this protein is Octanoyltransferase.